The primary structure comprises 793 residues: Protein PAT1 homolog (793 aa).

Residues Ser200 and Ser208 each carry the phosphoserine modification. Disordered regions lie at residues 203–256 (PPGS…TGNR) and 292–312 (MLQQ…GSQN). The span at 219–242 (PYQSGGPQMGSPNFSPFPNLQPQL) shows a compositional bias: polar residues. Phosphoserine is present on residues Ser342 and Ser343. Residues 476 to 501 (RPLLEVDPPNSAKFGNAEHKPTDKPL) form a disordered region. Positions 491–501 (NAEHKPTDKPL) are enriched in basic and acidic residues.

In terms of assembly, interacts with MPK4 and SUMM2. Phosphorylated at Ser-208 by MPK4 upon flg22 elicitation. Phosphorylated at Ser-200, Ser-342 and Ser-343 upon flg22 elicitation.

Its subcellular location is the cytoplasm. The protein localises to the P-body. Activator of mRNA decapping. Involved in mRNA decay via decapping. Involved in disease resistance in response to biotrophic and necrotrophic pathogens. Is part of a signaling pathway including MPK4 and the disease resistance protein SUMM2. This Arabidopsis thaliana (Mouse-ear cress) protein is Protein PAT1 homolog.